A 117-amino-acid chain; its full sequence is Minor capsid protein VP2 (117 aa).

The protein belongs to the lagovirus VP2 protein family. In terms of assembly, homooligomer. The portal-like structure consists in 12 copies of VP2. Interacts with capsid protein VP1.

It is found in the virion. It localises to the host cytoplasm. Functionally, minor structural protein that forms a portal-like structure at a unique three-fold axis of symmetry, following binding to the host receptor. The channel formed by VP2 may allow the delivery of the viral genome through the host endosomal membrane. This is Minor capsid protein VP2 from Rabbit hemorrhagic disease virus (strain AST89) (Ra/LV/RHDV/AST89/1989/SP).